We begin with the raw amino-acid sequence, 862 residues long: Protein translocase subunit SecA (862 aa).

ATP contacts are provided by residues Gln86, 104–108 (GEGKT), and Asp499. Zn(2+) is bound by residues Cys848, Cys850, Cys859, and His860.

It belongs to the SecA family. In terms of assembly, monomer and homodimer. Part of the essential Sec protein translocation apparatus which comprises SecA, SecYEG and auxiliary proteins SecDF-YajC and YidC. Zn(2+) serves as cofactor.

Its subcellular location is the cell inner membrane. The protein localises to the cytoplasm. The catalysed reaction is ATP + H2O + cellular proteinSide 1 = ADP + phosphate + cellular proteinSide 2.. In terms of biological role, part of the Sec protein translocase complex. Interacts with the SecYEG preprotein conducting channel. Has a central role in coupling the hydrolysis of ATP to the transfer of proteins into and across the cell membrane, serving both as a receptor for the preprotein-SecB complex and as an ATP-driven molecular motor driving the stepwise translocation of polypeptide chains across the membrane. The chain is Protein translocase subunit SecA from Ehrlichia canis (strain Jake).